The sequence spans 793 residues: WASP homolog-associated protein with actin, membranes and microtubules (793 aa).

The segment at 1–253 is mediates association with membranes; that stretch reads MDSEQPDSLD…EVATSCKLGI (253 aa). The tract at residues 254-623 is mediates interaction with microtubules; the sequence is LKSLDEDELG…FVPVSDQTLS (370 aa). Coiled coils occupy residues 265-290 and 445-503; these read RRVA…SIQD and LGDN…LHQH. Disordered regions lie at residues 556–661 and 675–699; these read SMVS…SFQG and EDRP…PGSM. The span at 566-579 shows a compositional bias: basic residues; sequence SQKRLSTAHHHKTA. A compositionally biased stretch (polar residues) spans 618 to 628; that stretch reads SDQTLSGSSED. Positions 624–793 are mediates actin nucleation; the sequence is GSSEDLSLPP…DEPSPTEWDR (170 aa). The segment covering 632–654 has biased composition (pro residues); the sequence is PPQPPAPPLPPPPPPPPPPPLPP. 2 consecutive WH2 domains span residues 698–716 and 728–745; these read SMDE…LRKV and VNEQ…LKKV. The stretch at 755 to 785 forms a coiled coil; the sequence is KKSTSDLERSIREALERIKKVSADSEEDNDE. The interval 772–793 is disordered; the sequence is IKKVSADSEEDNDEPSPTEWDR. Over residues 778–787 the composition is skewed to acidic residues; it reads DSEEDNDEPS. Serine 779 carries the phosphoserine modification.

In terms of assembly, interacts with ACTR3; indicative for an association with the ARP2/3 complex. Associates with microtubules; in vitro binds to tubulin heterodimer in a 1:1 stoichiometry; decorates microtubules with a repeat of 80 A along protofilaments. Interacts with RHOD (in GTP-bound form).

It localises to the cytoplasm. Its subcellular location is the endoplasmic reticulum-Golgi intermediate compartment. The protein resides in the cytoplasmic vesicle membrane. It is found in the golgi apparatus. The protein localises to the cis-Golgi network. In terms of biological role, acts as a nucleation-promoting factor (NPF) that stimulates Arp2/3-mediated actin polymerization both at the Golgi apparatus and along tubular membranes. Involved as a regulator of Golgi positioning and morphology. Its activity in membrane tubulation requires F-actin and interaction with microtubules. Proposed to use coordinated actin-nucleating and microtubule-binding activities of distinct WHAMM molecules to drive membrane tubule elongation; when MT-bound can recruit and remodel membrane vesicles but is prevented to activate the Arp2/3 complex. Required for RhoD-dependent actin reorganization such as in cell adhesion and cell migration. Participates in vesicle transport between the endoplasmic reticulum and the Golgi complex. The chain is WASP homolog-associated protein with actin, membranes and microtubules (Whamm) from Mus musculus (Mouse).